Consider the following 523-residue polypeptide: 3-hydroxybenzoate--CoA ligase (523 aa).

Belongs to the ATP-dependent AMP-binding enzyme family. Benzoate-CoA ligase subfamily.

The enzyme catalyses 3-hydroxybenzoate + ATP + CoA = 3-hydroxybenzoyl-CoA + AMP + diphosphate. The catalysed reaction is 4-hydroxybenzoate + ATP + CoA = 4-hydroxybenzoyl-CoA + AMP + diphosphate. In terms of biological role, ligase involved in the anaerobic degradation of 3-hydroxybenzoate (3OHBz). Catalyzes the activation of 3-hydroxybenzoate to 3-hydroxybenzoyl-CoA. Also shows high activity with protocatechuate and 4-hydroxybenzoate. Exhibits lower activity with benzoate, but cannot use 2-hydroxybenzoate or benzoate analogs containing other substituents at the ortho position, such as 2-aminobenzoate (anthranilate). The polypeptide is 3-hydroxybenzoate--CoA ligase (Aromatoleum sp. (strain CIB) (Azoarcus sp. (strain CIB))).